A 279-amino-acid polypeptide reads, in one-letter code: GTP cyclohydrolase MptA (279 aa).

It belongs to the GTP cyclohydrolase IV family. In terms of assembly, homodimer. It depends on Fe(2+) as a cofactor.

The enzyme catalyses GTP + H2O = 7,8-dihydroneopterin 2',3'-cyclic phosphate + formate + diphosphate + H(+). The protein operates within cofactor biosynthesis; 5,6,7,8-tetrahydromethanopterin biosynthesis. Converts GTP to 7,8-dihydro-D-neopterin 2',3'-cyclic phosphate, the first intermediate in the biosynthesis of coenzyme methanopterin. This is GTP cyclohydrolase MptA from Korarchaeum cryptofilum (strain OPF8).